Reading from the N-terminus, the 227-residue chain is NAD(P)H-quinone oxidoreductase subunit K, chloroplastic (227 aa).

[4Fe-4S] cluster-binding residues include Cys43, Cys44, Cys108, and Cys139.

It belongs to the complex I 20 kDa subunit family. In terms of assembly, NDH is composed of at least 16 different subunits, 5 of which are encoded in the nucleus. [4Fe-4S] cluster is required as a cofactor.

It localises to the plastid. The protein resides in the chloroplast thylakoid membrane. It carries out the reaction a plastoquinone + NADH + (n+1) H(+)(in) = a plastoquinol + NAD(+) + n H(+)(out). The enzyme catalyses a plastoquinone + NADPH + (n+1) H(+)(in) = a plastoquinol + NADP(+) + n H(+)(out). NDH shuttles electrons from NAD(P)H:plastoquinone, via FMN and iron-sulfur (Fe-S) centers, to quinones in the photosynthetic chain and possibly in a chloroplast respiratory chain. The immediate electron acceptor for the enzyme in this species is believed to be plastoquinone. Couples the redox reaction to proton translocation, and thus conserves the redox energy in a proton gradient. This Drimys granadensis protein is NAD(P)H-quinone oxidoreductase subunit K, chloroplastic.